A 368-amino-acid polypeptide reads, in one-letter code: Ribulose bisphosphate carboxylase-like protein 1 (368 aa).

Belongs to the RuBisCO large chain family. Type IV subfamily.

Its function is as follows. Unknown. Probably does not have RuBisCO activity. In Rhodopseudomonas palustris (strain ATCC BAA-98 / CGA009), this protein is Ribulose bisphosphate carboxylase-like protein 1 (rlp1).